We begin with the raw amino-acid sequence, 609 residues long: Phosphoenolpyruvate carboxykinase [GTP] (609 aa).

Substrate is bound by residues arginine 81 and 220 to 222 (YGG). Mn(2+) contacts are provided by lysine 229 and histidine 249. Serine 271 contacts substrate. 272–277 (ACGKTN) provides a ligand contact to GTP. Cysteine 273 is a catalytic residue. A Mn(2+)-binding site is contributed by aspartate 296. 387–389 (NSR) contributes to the substrate binding site. GTP is bound by residues arginine 389, arginine 420, and 515 to 518 (FGEN).

The protein belongs to the phosphoenolpyruvate carboxykinase [GTP] family. Monomer. Mn(2+) is required as a cofactor.

It is found in the cytoplasm. It carries out the reaction oxaloacetate + GTP = phosphoenolpyruvate + GDP + CO2. Its pathway is carbohydrate biosynthesis; gluconeogenesis. Its function is as follows. Catalyzes the conversion of oxaloacetate (OAA) to phosphoenolpyruvate (PEP), the rate-limiting step in the metabolic pathway that produces glucose from lactate and other precursors derived from the citric acid cycle. The protein is Phosphoenolpyruvate carboxykinase [GTP] of Mycolicibacterium paratuberculosis (strain ATCC BAA-968 / K-10) (Mycobacterium paratuberculosis).